The following is a 199-amino-acid chain: dTTP/UTP pyrophosphatase (199 aa).

The active-site Proton acceptor is Asp78.

This sequence belongs to the Maf family. YhdE subfamily. Requires a divalent metal cation as cofactor.

It is found in the cytoplasm. It carries out the reaction dTTP + H2O = dTMP + diphosphate + H(+). The enzyme catalyses UTP + H2O = UMP + diphosphate + H(+). Nucleoside triphosphate pyrophosphatase that hydrolyzes dTTP and UTP. May have a dual role in cell division arrest and in preventing the incorporation of modified nucleotides into cellular nucleic acids. This is dTTP/UTP pyrophosphatase from Clostridium acetobutylicum (strain ATCC 824 / DSM 792 / JCM 1419 / IAM 19013 / LMG 5710 / NBRC 13948 / NRRL B-527 / VKM B-1787 / 2291 / W).